The sequence spans 255 residues: Hemin import ATP-binding protein HmuV (255 aa).

An ABC transporter domain is found at 2–238 (LRAHNLHIRR…ESLKAVFGLE (237 aa)). 34–41 (GPNGAGKS) provides a ligand contact to ATP.

The protein belongs to the ABC transporter superfamily. Heme (hemin) importer (TC 3.A.1.14.5) family. The complex is composed of two ATP-binding proteins (HmuV), two transmembrane proteins (HmuU) and a solute-binding protein (HmuT).

The protein resides in the cell inner membrane. In terms of biological role, part of the ABC transporter complex HmuTUV involved in hemin import. Responsible for energy coupling to the transport system. The protein is Hemin import ATP-binding protein HmuV of Pseudomonas fluorescens (strain Pf0-1).